The primary structure comprises 178 residues: Ribosome maturation factor RimM (178 aa).

The 81-residue stretch at 98–178 (DGEYYWNQLE…RILVDWDPEF (81 aa)) folds into the PRC barrel domain.

The protein belongs to the RimM family. As to quaternary structure, binds ribosomal protein uS19.

The protein localises to the cytoplasm. Functionally, an accessory protein needed during the final step in the assembly of 30S ribosomal subunit, possibly for assembly of the head region. Essential for efficient processing of 16S rRNA. May be needed both before and after RbfA during the maturation of 16S rRNA. It has affinity for free ribosomal 30S subunits but not for 70S ribosomes. The protein is Ribosome maturation factor RimM of Cellvibrio japonicus (strain Ueda107) (Pseudomonas fluorescens subsp. cellulosa).